Reading from the N-terminus, the 276-residue chain is Phosphatidylcholine synthase (276 aa).

The Cytoplasmic portion of the chain corresponds to 1–30; sequence MGGQKEMADSVKTKLTGKLKAKKVTAPQAK. A helical membrane pass occupies residues 31 to 51; the sequence is AFSVHLLTASGSFLAFLSVVA. The Periplasmic portion of the chain corresponds to 52 to 57; that stretch reads ASDGRY. Residues 58-78 form a helical membrane-spanning segment; the sequence is TAMWWWLGLALFVDGIDGPIA. Residues 79–91 lie on the Cytoplasmic side of the membrane; sequence RKLEVKYVLPNWS. A helical membrane pass occupies residues 92-112; the sequence is GELLDSIIDYVTYVLIPAFAL. At 113-115 the chain is on the periplasmic side; the sequence is YQS. Residues 116-136 form a helical membrane-spanning segment; sequence GFMGTNLSFISGAIIVVSSAI. Topologically, residues 137–146 are cytoplasmic; it reads YYADTGMKTK. A helical membrane pass occupies residues 147-167; that stretch reads ENFFKGFPVVWNMVVFTLFIV. The Periplasmic portion of the chain corresponds to 168 to 171; it reads RPGE. The helical transmembrane segment at 172 to 192 threads the bilayer; it reads WVAFGTVVASAILSFLPINFL. Residues 193-202 lie on the Cytoplasmic side of the membrane; the sequence is HPVRVVRLRP. Residues 203–223 form a helical membrane-spanning segment; that stretch reads LNLTIFLLWCAFGVIALYYML. At 224-230 the chain is on the periplasmic side; it reads DAPLWVR. The chain crosses the membrane as a helical span at residues 231–251; it reads IGISVTGLYIYFIGAIMQLFP. At 252 to 276 the chain is on the cytoplasmic side; it reads SLGREAALAKARKLVEKQQKSGEAP.

It belongs to the CDP-alcohol phosphatidyltransferase class-I family. Mn(2+) is required as a cofactor.

The protein resides in the cell inner membrane. It catalyses the reaction a CDP-1,2-diacyl-sn-glycerol + choline = a 1,2-diacyl-sn-glycero-3-phosphocholine + CMP + H(+). Its function is as follows. Condenses choline with CDP-diglyceride to produce phosphatidylcholine and CMP. The chain is Phosphatidylcholine synthase from Brucella melitensis biotype 1 (strain ATCC 23456 / CCUG 17765 / NCTC 10094 / 16M).